The primary structure comprises 550 residues: Arginine--tRNA ligase (550 aa).

The short motif at 130-140 is the 'HIGH' region element; it reads ANPTGPIHIGG.

Belongs to the class-I aminoacyl-tRNA synthetase family. As to quaternary structure, monomer.

The protein resides in the cytoplasm. It catalyses the reaction tRNA(Arg) + L-arginine + ATP = L-arginyl-tRNA(Arg) + AMP + diphosphate. This chain is Arginine--tRNA ligase (argS), found in Mycobacterium tuberculosis (strain CDC 1551 / Oshkosh).